Here is a 78-residue protein sequence, read N- to C-terminus: MEFREQVLDLLAEVAENDVVKENPDVEIFEEGIIDSFQTVGLLLEIQNKLGIEVSIMDFDRDEWATPNKIVEALEELK.

Residues 1 to 78 (MEFREQVLDL…KIVEALEELK (78 aa)) form the Carrier domain. Serine 36 is subject to O-(pantetheine 4'-phosphoryl)serine.

The protein belongs to the DltC family. 4'-phosphopantetheine is transferred from CoA to a specific serine of apo-DCP.

Its subcellular location is the cytoplasm. Its pathway is cell wall biogenesis; lipoteichoic acid biosynthesis. In terms of biological role, carrier protein involved in the D-alanylation of lipoteichoic acid (LTA). The loading of thioester-linked D-alanine onto DltC is catalyzed by D-alanine--D-alanyl carrier protein ligase DltA. The DltC-carried D-alanyl group is further transferred to cell membrane phosphatidylglycerol (PG) by forming an ester bond, probably catalyzed by DltD. D-alanylation of LTA plays an important role in modulating the properties of the cell wall in Gram-positive bacteria, influencing the net charge of the cell wall. The polypeptide is D-alanyl carrier protein (Staphylococcus carnosus (strain TM300)).